The chain runs to 323 residues: DNA-directed RNA polymerase subunit alpha (323 aa).

The segment at 1 to 233 is alpha N-terminal domain (alpha-NTD); the sequence is MGQEKVTVST…DLFIPFFHAE (233 aa). Residues 264-323 form an alpha C-terminal domain (alpha-CTD) region; sequence IALKYIYIDQSELPPRVYNCLKRSNINTFLELLNNSQEELMKIQDFRIEDVKHILDVLEI.

This sequence belongs to the RNA polymerase alpha chain family. As to quaternary structure, in plastids the minimal PEP RNA polymerase catalytic core is composed of four subunits: alpha, beta, beta', and beta''. When a (nuclear-encoded) sigma factor is associated with the core the holoenzyme is formed, which can initiate transcription.

The protein resides in the plastid. The protein localises to the chloroplast. The enzyme catalyses RNA(n) + a ribonucleoside 5'-triphosphate = RNA(n+1) + diphosphate. DNA-dependent RNA polymerase catalyzes the transcription of DNA into RNA using the four ribonucleoside triphosphates as substrates. The chain is DNA-directed RNA polymerase subunit alpha from Morus indica (Mulberry).